The following is a 509-amino-acid chain: Cytochrome P450 4A10 (509 aa).

The next 2 membrane-spanning stretches (helical) occupy residues 11 to 31 and 121 to 141; these read FTGSISGFLQVASVLGLLLLL and LLAPWIGYGLLLLNGQPWFQH. Glu320 provides a ligand contact to heme. Ser439 bears the Phosphoserine mark. Cys456 provides a ligand contact to heme.

This sequence belongs to the cytochrome P450 family. It depends on heme as a cofactor. In terms of tissue distribution, expressed in liver (at protein level) and kidney (at protein level).

Its subcellular location is the endoplasmic reticulum membrane. It localises to the microsome membrane. The catalysed reaction is an omega-methyl-long-chain fatty acid + reduced [NADPH--hemoprotein reductase] + O2 = an omega-hydroxy-long-chain fatty acid + oxidized [NADPH--hemoprotein reductase] + H2O + H(+). The enzyme catalyses dodecanoate + reduced [NADPH--hemoprotein reductase] + O2 = 12-hydroxydodecanoate + oxidized [NADPH--hemoprotein reductase] + H2O + H(+). It catalyses the reaction dodecanoate + reduced [NADPH--hemoprotein reductase] + O2 = 11-hydroxydodecanoate + oxidized [NADPH--hemoprotein reductase] + H2O + H(+). It carries out the reaction tetradecanoate + reduced [NADPH--hemoprotein reductase] + O2 = 14-hydroxytetradecanoate + oxidized [NADPH--hemoprotein reductase] + H2O + H(+). The catalysed reaction is hexadecanoate + reduced [NADPH--hemoprotein reductase] + O2 = 16-hydroxyhexadecanoate + oxidized [NADPH--hemoprotein reductase] + H2O + H(+). The enzyme catalyses (9Z)-octadecenoate + reduced [NADPH--hemoprotein reductase] + O2 = 18-hydroxy-(9Z)-octadecenoate + oxidized [NADPH--hemoprotein reductase] + H2O + H(+). It catalyses the reaction (9Z,12Z)-octadecadienoate + reduced [NADPH--hemoprotein reductase] + O2 = 18-hydroxy-(9Z,12Z)-octadecadienoate + oxidized [NADPH--hemoprotein reductase] + H2O + H(+). It carries out the reaction (9Z,12Z)-octadecadienoate + reduced [NADPH--hemoprotein reductase] + O2 = 17-hydroxy-(9Z,12Z)-octadecadienoate + oxidized [NADPH--hemoprotein reductase] + H2O + H(+). The catalysed reaction is (5Z,8Z,11Z,14Z)-eicosatetraenoate + reduced [NADPH--hemoprotein reductase] + O2 = 20-hydroxy-(5Z,8Z,11Z,14Z)-eicosatetraenoate + oxidized [NADPH--hemoprotein reductase] + H2O + H(+). The enzyme catalyses 8,9-epoxy-(5Z,11Z,14Z)-eicosatrienoate + reduced [NADPH--hemoprotein reductase] + O2 = 20-hydroxy-8,9-epoxy-(5Z,11Z,14Z)-eicosatrienoate + oxidized [NADPH--hemoprotein reductase] + H2O + H(+). A cytochrome P450 monooxygenase involved in the metabolism of fatty acids. Catalyzes predominantly the oxidation of the terminal carbon (omega-oxidation) of long-chain fatty acids. Acts as a major omega-hydroxylase for dodecanoic (lauric) acid in liver. In kidney, may play an important role in omega-hydroxylation of (5Z,8Z,11Z,14Z)-eicosatetraenoic acid (arachidonate) to 20-hydroxyeicosatetraenoic acid (20-HETE), a signaling molecule acting both as vasoconstrictive and natriuretic with overall effect on arterial blood pressure. Also participates in the formation of anti-inflammatory hydroxyepoxyeicosatrienoic acids (HEETs) in kidney by converting 8,9-epoxyeicosatrienoic acid (EET) to 20,8,9-HEET, an activator of PPARA. Displays substantially lower fatty acid omega-1 hydroxylase activity. Mechanistically, uses molecular oxygen inserting one oxygen atom into a substrate, and reducing the second into a water molecule, with two electrons provided by NADPH via cytochrome P450 reductase (CPR; NADPH-ferrihemoprotein reductase). The protein is Cytochrome P450 4A10 (Cyp4a10) of Rattus norvegicus (Rat).